We begin with the raw amino-acid sequence, 187 residues long: uncharacterized protein (187 aa).

A helical membrane pass occupies residues 8-28 (ITFFIILLICLICILLLLVVF). Residues 99–153 (PLENRRDMEAEEENQINEKQEPENAGETGQEEDDGLQKIHTSVTRTPSVVESQKR) are disordered. Polar residues predominate over residues 137 to 149 (IHTSVTRTPSVVE).

The protein localises to the membrane. This is an uncharacterized protein from Homo sapiens (Human).